The following is a 137-amino-acid chain: Acidic phospholipase A2 PL-II (137 aa).

Positions 1–17 (AVCVSLLGASSIRPLPL) are cleaved as a signal peptide. Disulfide bonds link C28–C89, C44–C136, C46–C62, C61–C117, C68–C110, C78–C103, and C96–C108. Ca(2+) is bound by residues Y45, G47, and G49. H65 is an active-site residue. D66 is a Ca(2+) binding site. Residue D111 is part of the active site.

The cofactor is Ca(2+). As to expression, expressed by the venom gland.

The protein resides in the secreted. The enzyme catalyses a 1,2-diacyl-sn-glycero-3-phosphocholine + H2O = a 1-acyl-sn-glycero-3-phosphocholine + a fatty acid + H(+). Functionally, snake venom phospholipase A2 (PLA2) that may act in the hemostasis system of the prey. Exhibits hydrolytic activities, and prefers the anionic micelles (dPPC with deoxycholate) (54 umol/mg/min) to the zwitterionic micelles (dPPC with Triton X-100) (15 umol/mg/min). PLA2 catalyzes the calcium-dependent hydrolysis of the 2-acyl groups in 3-sn-phosphoglycerides. This chain is Acidic phospholipase A2 PL-II, found in Walterinnesia aegyptia (Desert black snake).